Consider the following 547-residue polypeptide: MLKRLLKRPSLNLLAWLLLAAFYISICLNIAFFKQVLQALPLDSLHNVLVFLSMPVVAFSVINIVLTLSSFLWLNRPLACLFILVGAAAQYFIMTYGIVIDRSMIANIIDTTPAESYALMTPQMLLTLGFSGVLAALIACWIKIKPATSRLRSVLFRGANILVSVLLILLVAALFYKDYASLFRNNKELVKSLSPSNSIVASWSWYSHQRLANLPLVRIGEDAHRNPLMQNEKRKNLTILIVGETSRAENFSLNGYPRETNPRLAKDNVVYFPNTASCGTATAVSVPCMFSDMPREHYKEELAQHQEGVLDIIQRAGINVLWNDNDGGCKGACDRVPHQNVTALNLPDQCINGECYDEVLFHGLEEYINNLQGDGVIVLHTIGSHRPTYYNRYPPQFRKFTPTCDTNEIQTCTKEQLVNTYDNTLVYVDYIVDKAINLLKEHQDKFTTSLVYLSDHGESLGENGIYLHGLPYAIAPDSQKQVPMLLWLSEDYQKRYQVDQNCLQKQAQTQHYSQDNLFSTLLGLTGVETKYYQAADDILQTCRRVSE.

Transmembrane regions (helical) follow at residues 13–33 (LLAWLLLAAFYISICLNIAFF), 48–68 (VLVFLSMPVVAFSVINIVLTL), 80–100 (CLFILVGAAAQYFIMTYGIVI), 124–144 (MLLTLGFSGVLAALIACWIKI), and 155–175 (LFRGANILVSVLLILLVAALF).

It belongs to the phosphoethanolamine transferase family. EptA subfamily.

The protein resides in the cell inner membrane. There are several lipid A forms in this strain, including a phosphoethanolamine (1-O-P-pEtN) form; overexpression of this gene leads to higher levels of the 1-O-P-pEtN form of lipid A. In Escherichia coli O157:H7, this protein is Phosphoethanolamine transferase EptA (eptA).